Here is a 1155-residue protein sequence, read N- to C-terminus: DNA-directed RNA polymerase subunit beta (1155 aa).

Belongs to the RNA polymerase beta chain family. In terms of assembly, the RNAP catalytic core consists of 2 alpha, 1 beta, 1 beta' and 1 omega subunit. When a sigma factor is associated with the core the holoenzyme is formed, which can initiate transcription.

The enzyme catalyses RNA(n) + a ribonucleoside 5'-triphosphate = RNA(n+1) + diphosphate. DNA-dependent RNA polymerase catalyzes the transcription of DNA into RNA using the four ribonucleoside triphosphates as substrates. The sequence is that of DNA-directed RNA polymerase subunit beta from Borrelia duttonii (strain Ly).